Reading from the N-terminus, the 393-residue chain is Probable xylan O-acetyltransferase 11 (393 aa).

The Cytoplasmic portion of the chain corresponds to 1–9; it reads MHQPAIMQR. A helical; Signal-anchor for type II membrane protein transmembrane segment spans residues 10–26; the sequence is ALAVVALLAAAAAIAAA. The Lumenal segment spans residues 27–393; sequence QGESPELLPF…LFFPARDEAI (367 aa). Cystine bridges form between Cys-45–Cys-96, Cys-67–Cys-132, Cys-76–Cys-368, and Cys-283–Cys-364. Asn-102 is a glycosylation site (N-linked (GlcNAc...) asparagine). The GDS motif motif lies at 119–121; that stretch reads GDS. Ser-121 functions as the Nucleophile in the catalytic mechanism. The N-linked (GlcNAc...) asparagine glycan is linked to Asn-325. Asp-363 functions as the Proton donor in the catalytic mechanism. Residues 363-366 carry the DXXH motif motif; that stretch reads DCTH. Residue His-366 is the Proton acceptor of the active site.

This sequence belongs to the PC-esterase family. TBL subfamily. Expressed in roots, leaves and stems.

It localises to the golgi apparatus membrane. Functionally, probable xylan acetyltransferase required for 2-O- and 3-O-monoacetylation of xylosyl residues in xylan. Possesses extremely low activity in vitro. The polypeptide is Probable xylan O-acetyltransferase 11 (Oryza sativa subsp. japonica (Rice)).